The primary structure comprises 102 residues: Small ribosomal subunit protein uS10 (102 aa).

Belongs to the universal ribosomal protein uS10 family. Part of the 30S ribosomal subunit.

Functionally, involved in the binding of tRNA to the ribosomes. This Kosmotoga olearia (strain ATCC BAA-1733 / DSM 21960 / TBF 19.5.1) protein is Small ribosomal subunit protein uS10.